Reading from the N-terminus, the 122-residue chain is Large ribosomal subunit protein uL14 (122 aa).

The protein belongs to the universal ribosomal protein uL14 family. Part of the 50S ribosomal subunit. Forms a cluster with proteins L3 and L19. In the 70S ribosome, L14 and L19 interact and together make contacts with the 16S rRNA in bridges B5 and B8.

In terms of biological role, binds to 23S rRNA. Forms part of two intersubunit bridges in the 70S ribosome. The sequence is that of Large ribosomal subunit protein uL14 from Streptococcus thermophilus (strain CNRZ 1066).